The sequence spans 543 residues: Putative fatty acyl-CoA reductase CG8303 (543 aa).

Residues 1-29 (MAVITEHGGTTSSPPENNNSIGNGKHRVN) form a disordered region. Positions 8–22 (GGTTSSPPENNNSIG) are enriched in polar residues. 3 consecutive transmembrane segments (helical) span residues 386–406 (LFFYLFHLLPAMVFIIPEKLF), 500–520 (VFNVLYYAGYVVIFAVLYFAL), and 522–542 (LTLGLQIGLTLAVLIWGFLVW).

It belongs to the fatty acyl-CoA reductase family.

Its subcellular location is the membrane. It catalyses the reaction a long-chain fatty acyl-CoA + 2 NADPH + 2 H(+) = a long-chain primary fatty alcohol + 2 NADP(+) + CoA. The catalysed reaction is hexadecanoyl-CoA + 2 NADPH + 2 H(+) = hexadecan-1-ol + 2 NADP(+) + CoA. The enzyme catalyses octadecanoyl-CoA + 2 NADPH + 2 H(+) = octadecan-1-ol + 2 NADP(+) + CoA. In terms of biological role, catalyzes the reduction of C16 or C18 fatty acyl-CoA to fatty alcohols. The protein is Putative fatty acyl-CoA reductase CG8303 of Drosophila melanogaster (Fruit fly).